The primary structure comprises 562 residues: Sulfite reductase [NADPH] hemoprotein beta-component (562 aa).

Positions 428, 434, 473, and 477 each coordinate [4Fe-4S] cluster. Siroheme is bound at residue C477.

The protein belongs to the nitrite and sulfite reductase 4Fe-4S domain family. In terms of assembly, alpha(8)-beta(8). The alpha component is a flavoprotein, the beta component is a hemoprotein. Siroheme serves as cofactor. It depends on [4Fe-4S] cluster as a cofactor.

It carries out the reaction hydrogen sulfide + 3 NADP(+) + 3 H2O = sulfite + 3 NADPH + 4 H(+). The protein operates within sulfur metabolism; hydrogen sulfide biosynthesis; hydrogen sulfide from sulfite (NADPH route): step 1/1. Its function is as follows. Component of the sulfite reductase complex that catalyzes the 6-electron reduction of sulfite to sulfide. This is one of several activities required for the biosynthesis of L-cysteine from sulfate. The protein is Sulfite reductase [NADPH] hemoprotein beta-component of Myxococcus xanthus (strain DK1622).